A 322-amino-acid polypeptide reads, in one-letter code: Arginase (322 aa).

The Mn(2+) site is built by His113, Asp141, His143, and Asp145. Residues 143 to 147 (HADIN), 154 to 156 (SGN), and Asp200 each bind substrate. Mn(2+) is bound by residues Asp247 and Asp249. Residues Thr261 and Glu292 each contribute to the substrate site.

This sequence belongs to the arginase family. As to quaternary structure, homotrimer. Mn(2+) serves as cofactor.

The catalysed reaction is L-arginine + H2O = urea + L-ornithine. It functions in the pathway nitrogen metabolism; urea cycle; L-ornithine and urea from L-arginine: step 1/1. This Coccidioides immitis (strain RS) (Valley fever fungus) protein is Arginase (ARG).